Consider the following 85-residue polypeptide: MGSMSIWHWLVVGVLVLLLFGKGRFSDMMGDVAKGIKSFKKGMSEEDEPTQPAEPRPTPRLQQQPPIEPNADPKLQPMQDDRPQH.

A helical membrane pass occupies residues 1–21; the sequence is MGSMSIWHWLVVGVLVLLLFG. Positions 39–85 are disordered; that stretch reads FKKGMSEEDEPTQPAEPRPTPRLQQQPPIEPNADPKLQPMQDDRPQH.

It belongs to the TatA/E family. In terms of assembly, the Tat system comprises two distinct complexes: a TatABC complex, containing multiple copies of TatA, TatB and TatC subunits, and a separate TatA complex, containing only TatA subunits. Substrates initially bind to the TatABC complex, which probably triggers association of the separate TatA complex to form the active translocon.

It is found in the cell inner membrane. Part of the twin-arginine translocation (Tat) system that transports large folded proteins containing a characteristic twin-arginine motif in their signal peptide across membranes. TatA could form the protein-conducting channel of the Tat system. This Rhizorhabdus wittichii (strain DSM 6014 / CCUG 31198 / JCM 15750 / NBRC 105917 / EY 4224 / RW1) (Sphingomonas wittichii) protein is Sec-independent protein translocase protein TatA.